The sequence spans 340 residues: Methionine import ATP-binding protein MetN 2 (340 aa).

Positions 2–241 (ITLQNVVKEY…PQEKVTQRFV (240 aa)) constitute an ABC transporter domain. An ATP-binding site is contributed by 38-45 (GYSGAGKS).

It belongs to the ABC transporter superfamily. Methionine importer (TC 3.A.1.24) family. The complex is composed of two ATP-binding proteins (MetN), two transmembrane proteins (MetI) and a solute-binding protein (MetQ).

It is found in the cell membrane. The enzyme catalyses L-methionine(out) + ATP + H2O = L-methionine(in) + ADP + phosphate + H(+). It catalyses the reaction D-methionine(out) + ATP + H2O = D-methionine(in) + ADP + phosphate + H(+). Functionally, part of the ABC transporter complex MetNIQ involved in methionine import. Responsible for energy coupling to the transport system. The polypeptide is Methionine import ATP-binding protein MetN 2 (Listeria monocytogenes serotype 4b (strain F2365)).